The following is a 242-amino-acid chain: MEPKYQRILIKLSGEALAGDKGVGIDIPTVQSIAKEIAEVHNSGVQIALVIGGGNLWRGEPAAEAGMDRVQADYTGMLGTVMNALVMADSLQQYGVDTRVQTAIPMQTVAEPYVRGRALRHLEKDRIVVFGAGIGSPYFSTDTTAALRAAEIEAEAILMAKNGVDGVYNADPKKDANAVKFDELTHVEVIKRGLKIMDATASTISMDNDIDLVVFNMNETGNIKRVVLGEQIGTTVSNKASE.

Residue 11–14 coordinates ATP; that stretch reads KLSG. The involved in allosteric activation by GTP stretch occupies residues 19 to 24; that stretch reads GDKGVG. Residue G53 participates in UMP binding. The ATP site is built by G54 and R58. UMP-binding positions include D73 and 134–141; that span reads IGSPYFST. Residues N162, Y168, and D171 each coordinate ATP.

It belongs to the UMP kinase family. As to quaternary structure, homohexamer.

The protein localises to the cytoplasm. The enzyme catalyses UMP + ATP = UDP + ADP. It functions in the pathway pyrimidine metabolism; CTP biosynthesis via de novo pathway; UDP from UMP (UMPK route): step 1/1. With respect to regulation, allosterically activated by GTP. Inhibited by UTP. Catalyzes the reversible phosphorylation of UMP to UDP. The protein is Uridylate kinase of Streptococcus agalactiae serotype III (strain NEM316).